The sequence spans 420 residues: Glucose-1-phosphate adenylyltransferase (420 aa).

Alpha-D-glucose 1-phosphate contacts are provided by residues Y107, G172, E187–K188, and S205.

It belongs to the bacterial/plant glucose-1-phosphate adenylyltransferase family. Homotetramer.

The catalysed reaction is alpha-D-glucose 1-phosphate + ATP + H(+) = ADP-alpha-D-glucose + diphosphate. The protein operates within glycan biosynthesis; glycogen biosynthesis. Functionally, involved in the biosynthesis of ADP-glucose, a building block required for the elongation reactions to produce glycogen. Catalyzes the reaction between ATP and alpha-D-glucose 1-phosphate (G1P) to produce pyrophosphate and ADP-Glc. This Rhodopseudomonas palustris (strain BisB18) protein is Glucose-1-phosphate adenylyltransferase.